Consider the following 341-residue polypeptide: MEDDFDIRDARMPENEREYENVLRPLSLRDFSGQAKVVENLKVFVMAARMRKEALDHVLLHGPPGLGKTTLSNIIANELGVGFKVTSGPVLDKPGDLAGVLTSLEKNDVLFIDEIHRLSPIVEEYLYSAMEDYRIDIVIDKGPSARSIQIDLAPFTLIGATTRSGLLTSPLRARFGINMHLEYYDMETLTKIVLRSANILNVKCELNAAREIASRSRGTPRIANALLRRVRDFAQVKGNGDIDKAIACFSLEALNIDRYGLDQIDNKLLTTIIDKFKGGPVGLTTIATALGEDPGTLEEVYEPFLIKEGFIKRTPRGREVTDLAYTHLGRSRVGEQGFLFD.

Positions 3–184 (DDFDIRDARM…FGINMHLEYY (182 aa)) are large ATPase domain (RuvB-L). Residues Leu-23, Arg-24, Gly-65, Lys-68, Thr-69, Thr-70, 131–133 (EDY), Arg-174, Tyr-184, and Arg-221 each bind ATP. Thr-69 is a Mg(2+) binding site. The interval 185 to 255 (DMETLTKIVL…IACFSLEALN (71 aa)) is small ATPAse domain (RuvB-S). The head domain (RuvB-H) stretch occupies residues 258-341 (RYGLDQIDNK…RVGEQGFLFD (84 aa)). Residues Arg-313 and Arg-318 each coordinate DNA.

Belongs to the RuvB family. Homohexamer. Forms an RuvA(8)-RuvB(12)-Holliday junction (HJ) complex. HJ DNA is sandwiched between 2 RuvA tetramers; dsDNA enters through RuvA and exits via RuvB. An RuvB hexamer assembles on each DNA strand where it exits the tetramer. Each RuvB hexamer is contacted by two RuvA subunits (via domain III) on 2 adjacent RuvB subunits; this complex drives branch migration. In the full resolvosome a probable DNA-RuvA(4)-RuvB(12)-RuvC(2) complex forms which resolves the HJ.

Its subcellular location is the cytoplasm. The enzyme catalyses ATP + H2O = ADP + phosphate + H(+). Its function is as follows. The RuvA-RuvB-RuvC complex processes Holliday junction (HJ) DNA during genetic recombination and DNA repair, while the RuvA-RuvB complex plays an important role in the rescue of blocked DNA replication forks via replication fork reversal (RFR). RuvA specifically binds to HJ cruciform DNA, conferring on it an open structure. The RuvB hexamer acts as an ATP-dependent pump, pulling dsDNA into and through the RuvAB complex. RuvB forms 2 homohexamers on either side of HJ DNA bound by 1 or 2 RuvA tetramers; 4 subunits per hexamer contact DNA at a time. Coordinated motions by a converter formed by DNA-disengaged RuvB subunits stimulates ATP hydrolysis and nucleotide exchange. Immobilization of the converter enables RuvB to convert the ATP-contained energy into a lever motion, pulling 2 nucleotides of DNA out of the RuvA tetramer per ATP hydrolyzed, thus driving DNA branch migration. The RuvB motors rotate together with the DNA substrate, which together with the progressing nucleotide cycle form the mechanistic basis for DNA recombination by continuous HJ branch migration. Branch migration allows RuvC to scan DNA until it finds its consensus sequence, where it cleaves and resolves cruciform DNA. This chain is Holliday junction branch migration complex subunit RuvB, found in Parabacteroides distasonis (strain ATCC 8503 / DSM 20701 / CIP 104284 / JCM 5825 / NCTC 11152).